Reading from the N-terminus, the 272-residue chain is Bis(5'-nucleosyl)-tetraphosphatase, symmetrical (272 aa).

Belongs to the Ap4A hydrolase family.

The catalysed reaction is P(1),P(4)-bis(5'-adenosyl) tetraphosphate + H2O = 2 ADP + 2 H(+). Its function is as follows. Hydrolyzes diadenosine 5',5'''-P1,P4-tetraphosphate to yield ADP. This is Bis(5'-nucleosyl)-tetraphosphatase, symmetrical from Chromohalobacter salexigens (strain ATCC BAA-138 / DSM 3043 / CIP 106854 / NCIMB 13768 / 1H11).